Here is a 241-residue protein sequence, read N- to C-terminus: Probable pectate lyase D (241 aa).

A signal peptide spans 1–17 (MYQKSLLFSLLATSALA). The N-linked (GlcNAc...) asparagine glycan is linked to Asn-215. A disordered region spans residues 215-241 (NNSGDEPEEVSEGPSDACQYSEPLSSC).

It belongs to the polysaccharide lyase 3 family. Ca(2+) serves as cofactor.

It localises to the secreted. It carries out the reaction Eliminative cleavage of (1-&gt;4)-alpha-D-galacturonan to give oligosaccharides with 4-deoxy-alpha-D-galact-4-enuronosyl groups at their non-reducing ends.. In terms of biological role, pectinolytic enzyme consist of four classes of enzymes: pectin lyase, polygalacturonase, pectin methylesterase and rhamnogalacturonase. Among pectinolytic enzymes, pectin lyase is the most important in depolymerization of pectin, since it cleaves internal glycosidic bonds of highly methylated pectins. Favors pectate, the anion, over pectin, the methyl ester. This is Probable pectate lyase D (plyD) from Neosartorya fischeri (strain ATCC 1020 / DSM 3700 / CBS 544.65 / FGSC A1164 / JCM 1740 / NRRL 181 / WB 181) (Aspergillus fischerianus).